We begin with the raw amino-acid sequence, 581 residues long: Prolactin receptor (581 aa).

The first 24 residues, 1-24 (MKENAASRVVFILLLFLSVSLLNG), serve as a signal peptide directing secretion. Over 25 to 237 (QSPPEKPKLV…NDFPVKDTSM (213 aa)) the chain is Extracellular. Fibronectin type-III domains are found at residues 27 to 127 (PPEK…IVEP) and 129 to 229 (PPAN…IPND). Residues Cys36 and Cys46 are joined by a disulfide bond. A glycan (N-linked (GlcNAc...) asparagine) is linked at Asn59. Residues Cys75 and Cys86 are joined by a disulfide bond. N-linked (GlcNAc...) asparagine glycosylation is present at Asn132. Zn(2+)-binding residues include Asp211 and His212. A WSXWS motif motif is present at residues 215–219 (WSEWS). A helical transmembrane segment spans residues 238 to 258 (WIFVAILSAVICLIMVWAVAL). At 259–581 (KGYSMVTCIL…PAKKAPPALP (323 aa)) the chain is on the cytoplasmic side. Positions 267-275 (ILPPVPGPK) match the Box 1 motif motif. 2 disordered regions span residues 324 to 384 (QLMP…EKLE) and 458 to 499 (DQHA…PRPQ). 3 stretches are compositionally biased toward basic and acidic residues: residues 329 to 349 (PSKE…DSDS), 375 to 384 (HTPEGPEKLE), and 469 to 483 (ETGR…RESE).

It belongs to the type I cytokine receptor family. Type 1 subfamily. In terms of assembly, interacts with SMARCA1. Interacts with NEK3 and VAV2 and this interaction is prolactin-dependent. In terms of tissue distribution, expressed in all tissues examined; liver, peripheral blood lymphocytes, endometrium, corpus luteum, intestine, fetal thymus, fetal spleen, fetal liver and fetal brain.

It is found in the membrane. Functionally, this is a receptor for the anterior pituitary hormone prolactin. The chain is Prolactin receptor (PRLR) from Bos taurus (Bovine).